The following is a 238-amino-acid chain: Ribose-5-phosphate isomerase A (238 aa).

Residues 30-33 (SGST), 87-90 (DGAD), and 100-103 (KGGG) contribute to the substrate site. The active-site Proton acceptor is glutamate 109. Residue lysine 127 coordinates substrate.

This sequence belongs to the ribose 5-phosphate isomerase family. Homodimer.

The enzyme catalyses aldehydo-D-ribose 5-phosphate = D-ribulose 5-phosphate. Its pathway is carbohydrate degradation; pentose phosphate pathway; D-ribose 5-phosphate from D-ribulose 5-phosphate (non-oxidative stage): step 1/1. Its function is as follows. Catalyzes the reversible conversion of ribose-5-phosphate to ribulose 5-phosphate. This Prochlorococcus marinus (strain MIT 9303) protein is Ribose-5-phosphate isomerase A.